The sequence spans 137 residues: Small ribosomal subunit protein uS12 (137 aa).

Disordered stretches follow at residues 1–22 and 35–57; these read MPTINQLVRKPRKSKVSKSKSP and ATNNAAPQKRGVATRVGTMTPKK. Over residues 9–18 the composition is skewed to basic residues; that stretch reads RKPRKSKVSK. 3-methylthioaspartic acid is present on Asp102.

This sequence belongs to the universal ribosomal protein uS12 family. As to quaternary structure, part of the 30S ribosomal subunit. Contacts proteins S8 and S17. May interact with IF1 in the 30S initiation complex.

With S4 and S5 plays an important role in translational accuracy. In terms of biological role, interacts with and stabilizes bases of the 16S rRNA that are involved in tRNA selection in the A site and with the mRNA backbone. Located at the interface of the 30S and 50S subunits, it traverses the body of the 30S subunit contacting proteins on the other side and probably holding the rRNA structure together. The combined cluster of proteins S8, S12 and S17 appears to hold together the shoulder and platform of the 30S subunit. This is Small ribosomal subunit protein uS12 from Leuconostoc mesenteroides subsp. mesenteroides (strain ATCC 8293 / DSM 20343 / BCRC 11652 / CCM 1803 / JCM 6124 / NCDO 523 / NBRC 100496 / NCIMB 8023 / NCTC 12954 / NRRL B-1118 / 37Y).